The primary structure comprises 537 residues: Bifunctional purine biosynthesis protein PurH (537 aa).

An MGS-like domain is found at 11-158; that stretch reads ADIQRVRRAL…KNHAYVGVIV (148 aa).

The protein belongs to the PurH family.

The enzyme catalyses (6R)-10-formyltetrahydrofolate + 5-amino-1-(5-phospho-beta-D-ribosyl)imidazole-4-carboxamide = 5-formamido-1-(5-phospho-D-ribosyl)imidazole-4-carboxamide + (6S)-5,6,7,8-tetrahydrofolate. It carries out the reaction IMP + H2O = 5-formamido-1-(5-phospho-D-ribosyl)imidazole-4-carboxamide. It functions in the pathway purine metabolism; IMP biosynthesis via de novo pathway; 5-formamido-1-(5-phospho-D-ribosyl)imidazole-4-carboxamide from 5-amino-1-(5-phospho-D-ribosyl)imidazole-4-carboxamide (10-formyl THF route): step 1/1. The protein operates within purine metabolism; IMP biosynthesis via de novo pathway; IMP from 5-formamido-1-(5-phospho-D-ribosyl)imidazole-4-carboxamide: step 1/1. This chain is Bifunctional purine biosynthesis protein PurH, found in Parvibaculum lavamentivorans (strain DS-1 / DSM 13023 / NCIMB 13966).